An 88-amino-acid chain; its full sequence is Alpha-latrotoxin associated low molecular weight protein (88 aa).

A signal peptide spans 1 to 18 (MSKLFFVAFLCLIISVFA).

The protein belongs to the arthropod CHH/MIH/GIH/VIH hormone family. As to expression, expressed by the venom gland.

It is found in the secreted. Functionally, may increase the toxicity of alpha-latrotoxin and/or other venom components. Is non-toxic to mice and to the cockroach Periplaneta americana. This Latrodectus hesperus (Western black widow spider) protein is Alpha-latrotoxin associated low molecular weight protein.